A 468-amino-acid polypeptide reads, in one-letter code: 6-phospho-beta-galactosidase (468 aa).

D-galactose 6-phosphate-binding residues include Gln19, His116, Asn159, Glu160, and Asn297. The active-site Proton donor is Glu160. Glu375 (nucleophile) is an active-site residue. The D-galactose 6-phosphate site is built by Ser428, Trp429, Lys435, and Tyr437.

This sequence belongs to the glycosyl hydrolase 1 family.

The enzyme catalyses a 6-phospho-beta-D-galactoside + H2O = D-galactose 6-phosphate + an alcohol. Its pathway is carbohydrate metabolism; lactose degradation; D-galactose 6-phosphate and beta-D-glucose from lactose 6-phosphate: step 1/1. This Streptococcus pyogenes serotype M28 (strain MGAS6180) protein is 6-phospho-beta-galactosidase.